The primary structure comprises 294 residues: Putative glucose-6-phosphate 1-epimerase (294 aa).

2 residues coordinate substrate: arginine 74 and arginine 99. Histidine 164 is an active-site residue. Position 208 (aspartate 208) interacts with substrate. Glutamate 267 is a catalytic residue.

It belongs to the glucose-6-phosphate 1-epimerase family. As to quaternary structure, monomer in solution.

It catalyses the reaction alpha-D-glucose 6-phosphate = beta-D-glucose 6-phosphate. In terms of biological role, probably functions as a hexose-6-phosphate 1-epimerase. This Salmonella typhimurium (strain LT2 / SGSC1412 / ATCC 700720) protein is Putative glucose-6-phosphate 1-epimerase.